Consider the following 818-residue polypeptide: Structure-specific endonuclease subunit SLX4 (818 aa).

5 disordered regions span residues 1-39, 53-151, 279-324, 413-437, and 587-712; these read MSFLNSSRRRTRSPSPGQIFAPSATPIVIDSSPSVPSAS, RDPY…SSSN, FSEG…HQDS, NAQFPRKNSRPQKTRSPCSNPKTSK, and MLPA…MASE. Positions 28-39 are enriched in low complexity; sequence VIDSSPSVPSAS. A compositionally biased stretch (basic and acidic residues) spans 90–103; the sequence is PSERTKDAHGKDRF. Residues 306-316 are compositionally biased toward low complexity; that stretch reads TTSTTITSLST. The span at 426–437 shows a compositional bias: polar residues; that stretch reads TRSPCSNPKTSK. The span at 604–618 shows a compositional bias: basic and acidic residues; that stretch reads QMSKRDTIKSRDIRA. Polar residues-rich tracts occupy residues 621–640, 652–672, and 696–712; these read SRSNSNHIPGLVSSTSQNTG, SSKSNDIGTTQGSPLLTTQSV, and SLASNTPSSSTRTMASE.

It belongs to the SLX4 family. In terms of assembly, forms a heterodimer with SLX1. Post-translationally, phosphorylated in response to DNA damage.

The protein localises to the nucleus. Its function is as follows. Regulatory subunit of the SLX1-SLX4 structure-specific endonuclease that resolves DNA secondary structures generated during DNA repair and recombination. Has endonuclease activity towards branched DNA substrates, introducing single-strand cuts in duplex DNA close to junctions with ss-DNA. The protein is Structure-specific endonuclease subunit SLX4 of Uncinocarpus reesii (strain UAMH 1704).